A 348-amino-acid chain; its full sequence is Rhodopsin (348 aa).

At T1–A33 the chain is on the extracellular side. A glycan (N-linked (GlcNAc...) asparagine) is linked at N12. The helical transmembrane segment at Y34–V58 threads the bilayer. Residues T59–N70 lie on the Cytoplasmic side of the membrane. Residues Y71 to Y93 form a helical membrane-spanning segment. Residues S94–C107 lie on the Extracellular side of the membrane. Cysteines 107 and 184 form a disulfide. A helical membrane pass occupies residues N108–I130. The short motif at E131–W133 is the 'Ionic lock' involved in activated form stabilization element. Topologically, residues E131–H149 are cytoplasmic. The chain crosses the membrane as a helical span at residues A150 to V170. Topologically, residues G171–S199 are extracellular. N-linked (GlcNAc...) asparagine glycosylation is present at N197. The helical transmembrane segment at F200–G221 threads the bilayer. At R222–R249 the chain is on the cytoplasmic side. A helical transmembrane segment spans residues M250–F271. Residues I272–L283 lie on the Extracellular side of the membrane. A helical transmembrane segment spans residues F284–C305. K293 is subject to N6-(retinylidene)lysine. The Cytoplasmic portion of the chain corresponds to M306–A348. C320 carries S-palmitoyl cysteine lipidation. The segment at G327–A348 is disordered. Low complexity predominate over residues A332–A348.

Belongs to the G-protein coupled receptor 1 family. Opsin subfamily. In terms of processing, phosphorylated on some or all of the serine and threonine residues present in the C-terminal region. Post-translationally, contains one covalently linked retinal chromophore.

The protein resides in the membrane. Its subcellular location is the cell projection. It is found in the cilium. It localises to the photoreceptor outer segment. In terms of biological role, photoreceptor required for image-forming vision at low light intensity. While most salt water fish species use retinal as chromophore, most freshwater fish use 3-dehydroretinal, or a mixture of retinal and 3-dehydroretinal. Light-induced isomerization of 11-cis to all-trans retinal triggers a conformational change that activates signaling via G-proteins. Subsequent receptor phosphorylation mediates displacement of the bound G-protein alpha subunit by arrestin and terminates signaling. The protein is Rhodopsin (rho) of Neoniphon argenteus (Clearfin squirrelfish).